The sequence spans 275 residues: Apoptosis inhibitor 1 (275 aa).

2 BIR repeats span residues 24 to 91 (LIER…CVYA) and 126 to 193 (PSAR…CYFV). Zn(2+) is bound by residues Cys163, Cys166, His183, and Cys190. The RING-type zinc finger occupies 227-263 (CKVCLERQRDAVLLPCRHFCVCMQCYFALDGKCPTCR).

In terms of biological role, acts by blocking cellular apoptosis rather than by preventing viral stimulation of apoptosis. This Orgyia pseudotsugata (Douglas-fir tussock moth) protein is Apoptosis inhibitor 1 (IAP1).